A 244-amino-acid chain; its full sequence is Small ribosomal subunit protein uS3 (244 aa).

The region spanning 39-110 (IRDYVRKNLS…QIRINVIEVE (72 aa)) is the KH type-2 domain. The disordered stretch occupies residues 215–244 (EDAAPSNVGQPRRRNQQRRRQQFEDRSNEG). Over residues 225–234 (PRRRNQQRRR) the composition is skewed to basic residues. A compositionally biased stretch (basic and acidic residues) spans 235-244 (QQFEDRSNEG).

This sequence belongs to the universal ribosomal protein uS3 family. Part of the 30S ribosomal subunit. Forms a tight complex with proteins S10 and S14.

Its function is as follows. Binds the lower part of the 30S subunit head. Binds mRNA in the 70S ribosome, positioning it for translation. The polypeptide is Small ribosomal subunit protein uS3 (Synechococcus sp. (strain ATCC 27144 / PCC 6301 / SAUG 1402/1) (Anacystis nidulans)).